Consider the following 361-residue polypeptide: Transcription factor TCP10 (361 aa).

A TCP domain is found at arginine 29–leucine 87. Disordered regions lie at residues aspartate 220–methionine 259 and serine 295–alanine 317. Positions serine 295 to aspartate 304 are enriched in basic and acidic residues.

Interacts with AHP1, AHP2 and AHP3. Interacts with SPL. Mostly detected in lateral organs, such as leaves and flowers. Expressed in cotyledons, particularly in the vascular region, in leaves, roots, stems, buds, flowers and immature siliques.

It is found in the nucleus. Its function is as follows. Plays a pivotal role in the control of morphogenesis of shoot organs by negatively regulating the expression of boundary-specific genes such as CUC genes, probably through the induction of miRNA (e.g. miR164). Participates in ovule development. The polypeptide is Transcription factor TCP10 (TCP10) (Arabidopsis thaliana (Mouse-ear cress)).